The primary structure comprises 156 residues: Snaclec A14 (156 aa).

A signal peptide spans 1–23; the sequence is MGRFIFVRVGLLVVFLSLSGTGA. 3 cysteine pairs are disulfide-bonded: C27/C38, C55/C152, and C127/C144. The 120-residue stretch at 34-153 folds into the C-type lectin domain; sequence YDQHCYKAFD…CGDDYPFVCK (120 aa). N-linked (GlcNAc...) asparagine glycosylation occurs at N141.

This sequence belongs to the snaclec family. As to quaternary structure, heterodimer; disulfide-linked. In terms of tissue distribution, expressed by the venom gland.

Its subcellular location is the secreted. Its function is as follows. Interferes with one step of hemostasis (modulation of platelet aggregation, or coagulation cascade, for example). The polypeptide is Snaclec A14 (Macrovipera lebetinus (Levantine viper)).